We begin with the raw amino-acid sequence, 2146 residues long: MYPNWGRYGGSSHYPPPPVPPPPPVALPEASPGPGYSSSTTPAAPSSSGFMSFREQHLAQLQQLQQMHQKQMQCVLQPHHLPPPPLPPPPVMPGGGYGDWQPPPPPMPPPPGPALSYQKQQQYKHQMLHHQRDGPPGLVPMELESPPESPPVPPGSYMPPSQSYMPPPQPPPSYYPPTSSQPYLPPAQPSPSQSPPSQSYLAPTPSYSSSSSSSQSYLSHSQSYLPSSQASPSRPSQGHSKSQLLAPPPPSAPPGNKTTVQQEPLESGAKNKSTEQQQAAPEPDPSTMTPQEQQQYWYRQHLLSLQQRTKVHLPGHKKGPVVAKDTPEPVKEEVTVPATSQVPESPSSEEPPLPPPNEEVPPPLPPEEPQSEDPEEDARLKQLQAAAAHWQQHQQHRVGFQYQGIMQKHTQLQQILQQYQQIIQPPPHIQTMSVDMQLRHYEMQQQQFQHLYQEWEREFQLWEEQLHSYPHKDQLQEYEKQWKTWQGHMKATQSYLQEKVNSFQNMKNQYMGNMSMPPPFVPYSQMPPPLPTMPPPVLPPSLPPPVMPPALPATVPPPGMPPPVMPPSLPTSVPPPGMPPSLSSAGPPPVLPPPSLSSAGPPPVLPPPSLSSTAPPPVMPLPPLSSATPPPGIPPPGVPQGIPPQLTAAPVPPASSSQSSQVPEKPRPALLPTPVSFGSAPPTTYHPPLQSAGPSEQVNSKAPLSKSALPYSSFSSDQGLGESSAAPSQPITAVKDMPVRSGGLLPDPPRSSYLESPRGPRFDGPRRFEDLGSRCEGPRPKGPRFEGNRPDGPRPRYEGHPAEGTKSKWGMIPRGPASQFYITPSTSLSPRQSGPQWKGPKPAFGQQHQQQPKSQAEPLSGNKEPLADTSSNQQKNFKMQSAAFSIAADVKDVKAAQSNENLSDSQQEPPKSEVSEGPVEPSNWDQNVQSMETQIDKAQAVTQPVPLANKPVPAQSTFPSKTGGMEGGTAVATSSLTADNDFKPVGIGLPHSENNQDKGLPRPDNRDNRLEGNRGNSSSYRGPGQSRMEDTRDKGLVNRGRGQAISRGPGLVKQEDFRDKMMGRREDSREKMNRGEGSRDRGLVRPGSSREKVPGGLQGSQDRGAAGSRERGPPRRAGSQERGPLRRAGSRERIPPRRAGSRERGPPRGPGSRERGLGRSDFGRDRGPFRPEPGDGGEKMYPYHRDEPPRAPWNHGEERGHEEFPLDGRNAPMERERLDDWDRERYWRECERDYQDDTLELYNREDRFSAPPSRSHDGDRRGPWWDDWERDQDMDEDYNREMERDMDRDVDRISRPMDMYDRSLDNEWDRDYGRPLDEQESQFRERDIPSLPPLPPLPPLPPLDRYRDDRWREERNREHGYDRDFRDRGELRIREYPERGDTWREKRDYVPDRMDWERERLSDRWYPSDVDRHSPMAEHMPSSHHSSEMMGSDASLDSDQGLGGVMVLSQRQHEIILKAAQELKMLREQKEQLQKMKDFGSEPQMADHLPPQESRLQNTSSRPGMYPPPGSYRPPPPMGKPPGSIVRPSAPPARSSVPVTRPPVPIPPPPPPPPLPPPPPVIKPQTSAVEQERWDEDSFYGLWDTNDEQGLNSEFKSETAAIPSAPVLPPPPVHSSIPPPGPVPMGMPPMSKPPPVQQTVDYGHGRDISTNKVEQIPYGERITLRPDPLPERSTFETEHAGQRDRYDRERDREPYFDRQSNVIADHRDFKRDRETHRDRDRDRGVIDYDRDRFDRERRPRDDRAQSYRDKKDHSSSRRGGFDRPSYDRKSDRPVYEGPSMFGGERRTYPEERMPLPAPSLSHQPPPAPRVEKKPESKNVDDILKPPGRESRPERIVVIMRGLPGSGKTHVAKLIRDKEVEFGGPAPRVLSLDDYFITEVEKEEKDPDSGKKVKKKVMEYEYEAEMEETYRTSMFKTFKKTLDDGFFPFIILDAINDRVRHFDQFWSAAKTKGFEVYLAEMSADNQTCGKRNIHGRKLKEINKMADHWETAPRHMMRLDIRSLLQDAAIEEVEMEDFDANIEEQKEEKKDAEEEESELGYIPKSKWEMDTSEAKLDKLDGLRTGTKRKRDWEAIASRMEDYLQLPDDYDTRASEPGKKRVRWADLEEKKDADRKRAIGFVVGQTDWEKITDESGHLAEKALNRTKYI.

Disordered stretches follow at residues 1 to 381 (MYPN…ARLK) and 562 to 880 (PPVM…FKMQ). The segment covering 14–26 (YPPPPVPPPPPVA) has biased composition (pro residues). Composition is skewed to low complexity over residues 27–48 (LPEASPGPGYSSSTTPAAPSSS) and 58–79 (LAQLQQLQQMHQKQMQCVLQPH). Composition is skewed to pro residues over residues 80 to 92 (HLPPPPLPPPPVM), 101 to 113 (QPPPPPMPPPPGP), 147 to 157 (PESPPVPPGSY), 165 to 175 (MPPPQPPPSYY), and 183 to 194 (YLPPAQPSPSQS). Low complexity predominate over residues 195–237 (PPSQSYLAPTPSYSSSSSSSQSYLSHSQSYLPSSQASPSRPSQ). 2 stretches are compositionally biased toward polar residues: residues 256-279 (NKTTVQQEPLESGAKNKSTEQQQA) and 286-308 (STMTPQEQQQYWYRQHLLSLQQR). Residues 309-319 (TKVHLPGHKKG) are compositionally biased toward basic residues. Residues 325–334 (DTPEPVKEEV) are compositionally biased toward basic and acidic residues. Composition is skewed to pro residues over residues 349–368 (EEPPLPPPNEEVPPPLPPEE), 562–579 (PPVMPPSLPTSVPPPGMP), and 586–642 (GPPP…PQGI). Residues 643–663 (PPQLTAAPVPPASSSQSSQVP) show a composition bias toward low complexity. The segment covering 692–702 (AGPSEQVNSKA) has biased composition (polar residues). K735 is subject to N6-methyllysine. S756 carries the post-translational modification Phosphoserine. Positions 758–806 (RGPRFDGPRRFEDLGSRCEGPRPKGPRFEGNRPDGPRPRYEGHPAEGTK) are enriched in basic and acidic residues. R814 bears the Omega-N-methylarginine mark. Polar residues-rich tracts occupy residues 820-835 (FYITPSTSLSPRQSGP) and 868-880 (DTSSNQQKNFKMQ). S829 is subject to Phosphoserine. At R831 the chain carries Omega-N-methylarginine. K891 is covalently cross-linked (Glycyl lysine isopeptide (Lys-Gly) (interchain with G-Cter in SUMO2)). 2 disordered regions span residues 895 to 1211 (AAQS…GRNA) and 1243 to 1351 (NRED…DDRW). Polar residues-rich tracts occupy residues 896–909 (AQSNENLSDSQQEP) and 923–933 (NWDQNVQSMET). K983 is covalently cross-linked (Glycyl lysine isopeptide (Lys-Gly) (interchain with G-Cter in SUMO1); alternate). K983 is covalently cross-linked (Glycyl lysine isopeptide (Lys-Gly) (interchain with G-Cter in SUMO2); alternate). Composition is skewed to basic and acidic residues over residues 994–1012 (NNQDKGLPRPDNRDNRLEG), 1027–1036 (RMEDTRDKGL), and 1053–1093 (KQED…REKV). A Glycyl lysine isopeptide (Lys-Gly) (interchain with G-Cter in SUMO1); alternate cross-link involves residue K1053. K1053 participates in a covalent cross-link: Glycyl lysine isopeptide (Lys-Gly) (interchain with G-Cter in SUMO2); alternate. A phosphoserine mark is found at S1100 and S1119. Composition is skewed to basic and acidic residues over residues 1129-1211 (GSRE…GRNA) and 1243-1264 (NREDRFSAPPSRSHDGDRRGPW). The span at 1266-1276 (DDWERDQDMDE) shows a compositional bias: acidic residues. Positions 1277–1328 (DYNREMERDMDRDVDRISRPMDMYDRSLDNEWDRDYGRPLDEQESQFRERDI) are enriched in basic and acidic residues. Positions 1330–1342 (SLPPLPPLPPLPP) are enriched in pro residues. Position 1402 is a phosphoserine (S1402). Disordered stretches follow at residues 1407 to 1438 (PSDVDRHSPMAEHMPSSHHSSEMMGSDASLDS), 1469 to 1573 (QKEQ…EQER), and 1602 to 1828 (IPSA…PPGR). Residues 1417–1430 (AEHMPSSHHSSEMM) show a composition bias toward low complexity. Positions 1469 to 1480 (QKEQLQKMKDFG) are enriched in basic and acidic residues. Residues 1505–1520 (MYPPPGSYRPPPPMGK) show a composition bias toward pro residues. Positions 1521 to 1539 (PPGSIVRPSAPPARSSVPV) are enriched in low complexity. Composition is skewed to pro residues over residues 1540-1562 (TRPPVPIPPPPPPPPLPPPPPVI) and 1606-1636 (PVLPPPPVHSSIPPPGPVPMGMPPMSKPPPV). K1652 participates in a covalent cross-link: Glycyl lysine isopeptide (Lys-Gly) (interchain with G-Cter in SUMO2). Basic and acidic residues-rich tracts occupy residues 1662–1696 (ITLRPDPLPERSTFETEHAGQRDRYDRERDREPYF), 1704–1774 (ADHR…DRPV), 1783–1793 (GERRTYPEERM), and 1809–1828 (RVEKKPESKNVDDILKPPGR). A Glycyl lysine isopeptide (Lys-Gly) (interchain with G-Cter in SUMO2) cross-link involves residue K1710. The interval 2096 to 2103 (KKRVRWAD) is involved in interaction with PPP1CA.

In terms of assembly, interacts with PPP1CA and NCOA5. Forms a complex with ILF2, ILF3, KHDRBS1, RBMX, NCOA5 and PPP1CA. As to expression, expressed in neuronal, neuroblastoma and embryonic kidney cell lines (at protein level).

The protein localises to the nucleus. It localises to the nucleus speckle. In terms of biological role, plays a role in the reduction of telomerase activity during differentiation of embryonic stem cells by binding to the core promoter of TERT and controlling its down-regulation. The protein is YLP motif-containing protein 1 (YLPM1) of Homo sapiens (Human).